The sequence spans 206 residues: Guanylate kinase (206 aa).

The Guanylate kinase-like domain maps to 5–184 (GMLIVLSGPS…AAERIKAIIR (180 aa)). 12–19 (GPSGVGKG) serves as a coordination point for ATP.

Belongs to the guanylate kinase family.

It is found in the cytoplasm. It catalyses the reaction GMP + ATP = GDP + ADP. Essential for recycling GMP and indirectly, cGMP. This is Guanylate kinase from Lactiplantibacillus plantarum (strain ATCC BAA-793 / NCIMB 8826 / WCFS1) (Lactobacillus plantarum).